A 388-amino-acid polypeptide reads, in one-letter code: FMRFamide neuropeptides (388 aa).

An N-terminal signal peptide occupies residues 1 to 21 (MVAPLLVFLFSLQLCHTTSWA). Positions 22 to 172 (YVGGNSLNSN…SNHQVIRDSR (151 aa)) are excised as a propeptide. The tract at residues 40–74 (FPAGTSNEVPEDAANGQDDNDDSQLTEPNDNNAPL) is disordered. Residues 64–74 (LTEPNDNNAPL) are compositionally biased toward polar residues. 17 positions are modified to phenylalanine amide: phenylalanine 179, phenylalanine 196, phenylalanine 208, phenylalanine 219, phenylalanine 230, phenylalanine 241, phenylalanine 253, phenylalanine 265, phenylalanine 277, phenylalanine 289, phenylalanine 301, phenylalanine 313, phenylalanine 325, phenylalanine 337, phenylalanine 346, phenylalanine 359, and phenylalanine 372. The segment at 360–388 (GRTPTQSSDFMRFGKSLDKSENKTSDLQK) is disordered. Residues 374 to 388 (KSLDKSENKTSDLQK) show a composition bias toward basic and acidic residues. Residues 375–388 (SLDKSENKTSDLQK) constitute a propeptide that is removed on maturation.

This sequence belongs to the FARP (FMRFamide related peptide) family. In the brain, expressed in 2 large cells in the lateral neurons in each optic lobe, 2 slightly bigger cells on both sides of the tritocerebrum, around 14 small cells in the dorsal area, around 13 cells in the subesophageal ganglion, and in the central brain.

The protein resides in the secreted. In Musca domestica (House fly), this protein is FMRFamide neuropeptides.